Here is a 278-residue protein sequence, read N- to C-terminus: Antiviral protein MAP (278 aa).

A signal peptide spans 1 to 28; the sequence is MLTTTKVFFLLLTTWITWYAIVNPQSRA. Cysteine 64 and cysteine 248 are disulfide-bonded. Residue glutamate 196 is part of the active site.

It carries out the reaction Endohydrolysis of the N-glycosidic bond at one specific adenosine on the 28S rRNA.. Inhibits viral infection of plants, and protein synthesis in vitro. The sequence is that of Antiviral protein MAP from Mirabilis jalapa (Garden four-o'clock).